Consider the following 311-residue polypeptide: HPr kinase/phosphorylase (311 aa).

Residues H138 and K159 contribute to the active site. Position 153–160 (153–160) interacts with ATP; sequence GDSGIGKS. Position 160 (S160) interacts with Mg(2+). D177 functions as the Proton acceptor; for phosphorylation activity. Proton donor; for dephosphorylation activity in the catalytic mechanism. The important for the catalytic mechanism of both phosphorylation and dephosphorylation stretch occupies residues 201–210; sequence IEIRGVGIID. A Mg(2+)-binding site is contributed by E202. The active site involves R243. The tract at residues 264–269 is important for the catalytic mechanism of dephosphorylation; the sequence is PVKTGR.

This sequence belongs to the HPrK/P family. As to quaternary structure, homohexamer. Mg(2+) is required as a cofactor.

It carries out the reaction [HPr protein]-L-serine + ATP = [HPr protein]-O-phospho-L-serine + ADP + H(+). It catalyses the reaction [HPr protein]-O-phospho-L-serine + phosphate + H(+) = [HPr protein]-L-serine + diphosphate. Catalyzes the ATP- as well as the pyrophosphate-dependent phosphorylation of a specific serine residue in HPr, a phosphocarrier protein of the phosphoenolpyruvate-dependent sugar phosphotransferase system (PTS). HprK/P also catalyzes the pyrophosphate-producing, inorganic phosphate-dependent dephosphorylation (phosphorolysis) of seryl-phosphorylated HPr (P-Ser-HPr). The two antagonistic activities of HprK/P are regulated by several intracellular metabolites, which change their concentration in response to the absence or presence of rapidly metabolisable carbon sources (glucose, fructose, etc.) in the growth medium. Therefore, by controlling the phosphorylation state of HPr, HPrK/P is a sensor enzyme that plays a major role in the regulation of carbon metabolism and sugar transport: it mediates carbon catabolite repression (CCR), and regulates PTS-catalyzed carbohydrate uptake and inducer exclusion. The sequence is that of HPr kinase/phosphorylase from Streptococcus pneumoniae serotype 2 (strain D39 / NCTC 7466).